A 180-amino-acid polypeptide reads, in one-letter code: Adenine phosphoribosyltransferase (180 aa).

Belongs to the purine/pyrimidine phosphoribosyltransferase family. As to quaternary structure, homodimer.

Its subcellular location is the cytoplasm. The enzyme catalyses AMP + diphosphate = 5-phospho-alpha-D-ribose 1-diphosphate + adenine. It functions in the pathway purine metabolism; AMP biosynthesis via salvage pathway; AMP from adenine: step 1/1. Catalyzes a salvage reaction resulting in the formation of AMP, that is energically less costly than de novo synthesis. The polypeptide is Adenine phosphoribosyltransferase (Butyrivibrio fibrisolvens).